We begin with the raw amino-acid sequence, 331 residues long: Ketol-acid reductoisomerase (NADP(+)) (331 aa).

Positions 2–182 constitute a KARI N-terminal Rossmann domain; that stretch reads ARMYYDQDAN…GGTRAGILET (181 aa). NADP(+)-binding positions include 25–28, serine 51, serine 53, and 83–86; these read YGSQ and DEVQ. The active site involves histidine 108. Residue glycine 134 coordinates NADP(+). Positions 183-328 constitute a KARI C-terminal knotted domain; the sequence is TFREETETDL…KDLRAMFSWL (146 aa). Mg(2+)-binding residues include aspartate 191, glutamate 195, glutamate 227, and glutamate 231. Serine 252 contributes to the substrate binding site.

The protein belongs to the ketol-acid reductoisomerase family. Homooctamer. Requires Mg(2+) as cofactor.

The enzyme catalyses (2R)-2,3-dihydroxy-3-methylbutanoate + NADP(+) = (2S)-2-acetolactate + NADPH + H(+). It catalyses the reaction (2R,3R)-2,3-dihydroxy-3-methylpentanoate + NADP(+) = (S)-2-ethyl-2-hydroxy-3-oxobutanoate + NADPH + H(+). The protein operates within amino-acid biosynthesis; L-isoleucine biosynthesis; L-isoleucine from 2-oxobutanoate: step 2/4. It functions in the pathway amino-acid biosynthesis; L-valine biosynthesis; L-valine from pyruvate: step 2/4. Its function is as follows. Involved in the biosynthesis of branched-chain amino acids (BCAA). Catalyzes an alkyl-migration followed by a ketol-acid reduction of (S)-2-acetolactate (S2AL) to yield (R)-2,3-dihydroxy-isovalerate. In the isomerase reaction, S2AL is rearranged via a Mg-dependent methyl migration to produce 3-hydroxy-3-methyl-2-ketobutyrate (HMKB). In the reductase reaction, this 2-ketoacid undergoes a metal-dependent reduction by NADPH to yield (R)-2,3-dihydroxy-isovalerate. The chain is Ketol-acid reductoisomerase (NADP(+)) from Synechocystis sp. (strain ATCC 27184 / PCC 6803 / Kazusa).